The primary structure comprises 239 residues: Ribonuclease PH (239 aa).

Residues Arg-86 and 124 to 126 contribute to the phosphate site; that span reads GTR.

It belongs to the RNase PH family. Homohexameric ring arranged as a trimer of dimers.

It carries out the reaction tRNA(n+1) + phosphate = tRNA(n) + a ribonucleoside 5'-diphosphate. Phosphorolytic 3'-5' exoribonuclease that plays an important role in tRNA 3'-end maturation. Removes nucleotide residues following the 3'-CCA terminus of tRNAs; can also add nucleotides to the ends of RNA molecules by using nucleoside diphosphates as substrates, but this may not be physiologically important. Probably plays a role in initiation of 16S rRNA degradation (leading to ribosome degradation) during starvation. In Anaeromyxobacter dehalogenans (strain 2CP-1 / ATCC BAA-258), this protein is Ribonuclease PH.